We begin with the raw amino-acid sequence, 544 residues long: Dynein intermediate chain 1 (544 aa).

6 WD repeats span residues 241-281 (KARS…YPVS), 289-330 (GHLE…RPSE), 342-387 (SQCI…QPSN), 402-441 (VMTSNSQNVFLEKNKDFALTSSFDWTVRLWQCSPSRNQHE), 461-501 (THKA…EAPV), and 506-544 (PDGKPLNKIAWQPEKRNLACGGLNGNVHIYKHLSPNLAN).

The protein belongs to the dynein intermediate chain family.

It is found in the cytoplasm. Functionally, has a role in meiotic nuclear divsion where it promotes the movement of 'horsetails'. The sequence is that of Dynein intermediate chain 1 (dic1) from Schizosaccharomyces pombe (strain 972 / ATCC 24843) (Fission yeast).